A 424-amino-acid polypeptide reads, in one-letter code: Glutamyl-tRNA reductase (424 aa).

Residues 53–56 (TCNR), serine 111, 116–118 (EPQ), and glutamine 122 each bind substrate. Cysteine 54 functions as the Nucleophile in the catalytic mechanism. An NADP(+)-binding site is contributed by 191-196 (GAGEMI).

This sequence belongs to the glutamyl-tRNA reductase family. Homodimer.

The enzyme catalyses (S)-4-amino-5-oxopentanoate + tRNA(Glu) + NADP(+) = L-glutamyl-tRNA(Glu) + NADPH + H(+). The protein operates within porphyrin-containing compound metabolism; protoporphyrin-IX biosynthesis; 5-aminolevulinate from L-glutamyl-tRNA(Glu): step 1/2. Functionally, catalyzes the NADPH-dependent reduction of glutamyl-tRNA(Glu) to glutamate 1-semialdehyde (GSA). In Bordetella avium (strain 197N), this protein is Glutamyl-tRNA reductase.